The chain runs to 160 residues: CXXC motif containing zinc binding protein (160 aa).

Zn(2+) contacts are provided by Cys-33, Cys-36, Cys-67, and Cys-70.

The protein belongs to the UPF0587 family.

The polypeptide is CXXC motif containing zinc binding protein (czib) (Xenopus laevis (African clawed frog)).